The following is a 153-amino-acid chain: Transcription antitermination protein NusB (153 aa).

The protein belongs to the NusB family.

Its function is as follows. Involved in transcription antitermination. Required for transcription of ribosomal RNA (rRNA) genes. Binds specifically to the boxA antiterminator sequence of the ribosomal RNA (rrn) operons. This is Transcription antitermination protein NusB from Symbiobacterium thermophilum (strain DSM 24528 / JCM 14929 / IAM 14863 / T).